The primary structure comprises 721 residues: Rho GTPase-activating protein gacY (721 aa).

The tract at residues 1–325 (MDSSFKRASF…PQQPQQQQST (325 aa)) is disordered. The span at 17-33 (NIDNINEMNNNNMNTAP) shows a compositional bias: low complexity. Over residues 34–44 (APAPAPIPTPQ) the composition is skewed to pro residues. Residues 146–168 (DNNNNGNNNNNNNNNDNNNNNNN) are compositionally biased toward low complexity. A compositionally biased stretch (acidic residues) spans 169–181 (NDDDDEDEDDDEY). Composition is skewed to polar residues over residues 182 to 202 (SNVSAPSWNSVLSKAKTNTMN) and 219 to 240 (KNDSGGENSANTTSEDGSSSRR). Over residues 308–323 (QQQQQPQQPQQPQQQQ) the composition is skewed to low complexity. The CRAL-TRIO domain occupies 363-520 (KSQRFPEIEA…AIMMHRPAGK (158 aa)). The 192-residue stretch at 528–719 (APLEDVINRP…LILDNINILF (192 aa)) folds into the Rho-GAP domain.

The protein localises to the cytoplasm. In terms of biological role, rho GTPase-activating protein involved in the signal transduction pathway. This chain is Rho GTPase-activating protein gacY (gacY), found in Dictyostelium discoideum (Social amoeba).